The chain runs to 163 residues: Large ribosomal subunit protein bL17 (163 aa).

The disordered stretch occupies residues 127–163; it reads KEVKKAKSRRGGKAKKAEGTAPEAPAAESESTTEASE. Over residues 128-140 the composition is skewed to basic residues; that stretch reads EVKKAKSRRGGKA. The segment covering 145 to 163 has biased composition (low complexity); the sequence is GTAPEAPAAESESTTEASE.

It belongs to the bacterial ribosomal protein bL17 family. In terms of assembly, part of the 50S ribosomal subunit. Contacts protein L32.

The protein is Large ribosomal subunit protein bL17 of Flavobacterium johnsoniae (strain ATCC 17061 / DSM 2064 / JCM 8514 / BCRC 14874 / CCUG 350202 / NBRC 14942 / NCIMB 11054 / UW101) (Cytophaga johnsonae).